A 209-amino-acid polypeptide reads, in one-letter code: N-(5'-phosphoribosyl)anthranilate isomerase (209 aa).

Belongs to the TrpF family.

It catalyses the reaction N-(5-phospho-beta-D-ribosyl)anthranilate = 1-(2-carboxyphenylamino)-1-deoxy-D-ribulose 5-phosphate. It participates in amino-acid biosynthesis; L-tryptophan biosynthesis; L-tryptophan from chorismate: step 3/5. The protein is N-(5'-phosphoribosyl)anthranilate isomerase of Staphylococcus carnosus (strain TM300).